The chain runs to 664 residues: Acetolactate synthase 2, chloroplastic (664 aa).

Positions 1-34 (MAAAAAAPSPSFSKTLSSSSSKSSTLLPRSTFPF) are enriched in low complexity. A disordered region spans residues 1–51 (MAAAAAAPSPSFSKTLSSSSSKSSTLLPRSTFPFPHHPHKTTPPPLHLTPT). The N-terminal 91 residues, 1 to 91 (MAAAAAAPSP…VSRFAPDEPR (91 aa)), are a transit peptide targeting the chloroplast. E138 contributes to the thiamine diphosphate binding site. Residues C158 and C304 are joined by a disulfide bond. FAD contacts are provided by residues R240, 346–367 (HGTV…FGVR), and 389–408 (DIDS…ICAD). Residues 481–561 (QHQMWAAQYY…VKIMLLNNQH (81 aa)) form a thiamine pyrophosphate binding region. Mg(2+) is bound by residues D532 and N559.

Belongs to the TPP enzyme family. It depends on Mg(2+) as a cofactor. Thiamine diphosphate serves as cofactor.

The protein localises to the plastid. The protein resides in the chloroplast. The enzyme catalyses 2 pyruvate + H(+) = (2S)-2-acetolactate + CO2. It participates in amino-acid biosynthesis; L-isoleucine biosynthesis; L-isoleucine from 2-oxobutanoate: step 1/4. It functions in the pathway amino-acid biosynthesis; L-valine biosynthesis; L-valine from pyruvate: step 1/4. The chain is Acetolactate synthase 2, chloroplastic (ALS SURB) from Nicotiana tabacum (Common tobacco).